The primary structure comprises 479 residues: Anaerobic nitric oxide reductase flavorubredoxin (479 aa).

Positions 30-210 (LRGSSYNSYL…PFSRLVTPKI (181 aa)) are zinc metallo-hydrolase. His-79, Glu-81, Asp-83, His-147, Asp-166, and His-227 together coordinate Fe cation. Positions 254-393 (ITIFYDTMSN…LCRQHGRDIA (140 aa)) constitute a Flavodoxin-like domain. FMN-binding positions include 260–264 (TMSNN) and 342–369 (AFGS…EMSL). The Rubredoxin-like domain occupies 423-474 (GPKMQCSVCQWIYDPALGEPLQDVAPGTPWSEVPDNFLCPECSLGKDVFDVL). Cys-428, Cys-431, Cys-461, and Cys-464 together coordinate Fe cation.

In the N-terminal section; belongs to the zinc metallo-hydrolase group 3 family. As to quaternary structure, homotetramer. Fe cation serves as cofactor. It depends on FMN as a cofactor.

The protein localises to the cytoplasm. It participates in nitrogen metabolism; nitric oxide reduction. Its function is as follows. Anaerobic nitric oxide reductase; uses NADH to detoxify nitric oxide (NO), protecting several 4Fe-4S NO-sensitive enzymes. Has at least 2 reductase partners, only one of which (NorW, flavorubredoxin reductase) has been identified. NO probably binds to the di-iron center; electrons enter from the NorW at rubredoxin and are transferred sequentially to the FMN center and the di-iron center. Also able to function as an aerobic oxygen reductase. In Salmonella paratyphi A (strain ATCC 9150 / SARB42), this protein is Anaerobic nitric oxide reductase flavorubredoxin.